Reading from the N-terminus, the 91-residue chain is uncharacterized protein (91 aa).

A run of 2 helical transmembrane segments spans residues 5 to 27 and 47 to 69; these read FFKY…TNFQ and DFYH…FIFF.

Its subcellular location is the cell membrane. This is an uncharacterized protein from Archaeoglobus fulgidus (strain ATCC 49558 / DSM 4304 / JCM 9628 / NBRC 100126 / VC-16).